A 601-amino-acid chain; its full sequence is KLDQPAPSTQETSFIEKMKKTGRNIVVFYGSQTGTGEEFANRLSKDAHRYGMGSMAADPEEYDMSELSRLAEIGNSLAIFCMATYGEGDPTDNAQDFYDWLQETDGQLSGVNYPVFALGDKTYEHYNAMGAYVDKRLEELGAKRVFDLGMGDDDGNLEEDFVTWREQFWPAMCEHFGVEASGEDSSVRQYELKEHNDINMNKVYTGELGRLKSFETQKPPFDAKNPFLAPVTVNRKLNKAGELHKMHLEVDITGSKIRYESGDHVAVYPTNNTVIVNRLGQILGVDLDSVISLNNLDEESNKKHPFPCPTTYRTALTHYLDIIHPPRTNVLYELAQYATDLKDQENTDSMASSAPEGKALYQSFVLEDNRNILAILEDLPSLRPPIDHLCELMPRLQARYYSIASSSKVHPNSIHICAVLVEYXTKGVATTWLKYIRKSQFRLPFKASNPVIMVGPGTGIAPFMGFIQERGWLKESGKEVGETVLYCGCRHKEEDYLYQEELEQAHKKGALTKLNVAFSREQDQKVYVQHLLRKNKVDLWRQIHEDYAHIYICGDARNMARDVQTAFYEIAEELGGMTRTQATDYIKKLMTKGRYSQDVWS.

A Flavodoxin-like domain is found at 25-169; sequence IVVFYGSQTG…DFVTWREQFW (145 aa). FMN-binding positions include 31 to 36, 83 to 86, 118 to 127, and Asp-153; these read SQTGTG, ATYG, and LGDKTYEHYN. The FAD-binding FR-type domain maps to 224–425; it reads KNPFLAPVTV…ICAVLVEYXT (202 aa). Residues 399 to 402, 417 to 419, Tyr-423, and 427 to 430 contribute to the FAD site; these read RYYS, CAV, and GVAT. NADP(+) is bound by residues Thr-458, 519-520, 525-529, and Asp-562; these read SR and KVYVQ. Trp-600 serves as a coordination point for FAD.

It belongs to the NADPH--cytochrome P450 reductase family. This sequence in the N-terminal section; belongs to the flavodoxin family. The protein in the C-terminal section; belongs to the flavoprotein pyridine nucleotide cytochrome reductase family. FAD is required as a cofactor. Requires FMN as cofactor.

The protein resides in the endoplasmic reticulum membrane. The catalysed reaction is 2 oxidized [cytochrome P450] + NADPH = 2 reduced [cytochrome P450] + NADP(+) + H(+). This enzyme is required for electron transfer from NADP to cytochrome P450 in microsomes. It can also provide electron transfer to heme oxygenase and cytochrome B5. The polypeptide is NADPH--cytochrome P450 reductase (Salmo trutta (Brown trout)).